A 668-amino-acid chain; its full sequence is Patellin-5 (668 aa).

The segment at 1–263 (MSQDSATTTP…STTTSTVASR (263 aa)) is disordered. Composition is skewed to basic and acidic residues over residues 55–68 (ESNH…EKVT), 82–100 (AAED…ETAK), 107–125 (TAED…ETVK), and 132–150 (VAED…ETVK). Residues 170–186 (TPETETSEADTSLLVTS) show a composition bias toward polar residues. Acidic residues predominate over residues 218–231 (VEDWTEPELPDEAV). Pro residues predominate over residues 244-254 (PEPQTPPPPPS). The residue at position 290 (Ser-290) is a Phosphoserine. One can recognise a CRAL-TRIO domain in the interval 377–552 (DENLGDDLDK…QYGGLSVDNC (176 aa)). One can recognise a GOLD domain in the interval 556 to 662 (SDFTHDDIAT…KKMLIYRFKV (107 aa)).

It belongs to the patellin family.

Its subcellular location is the membrane. It is found in the cytoplasm. Its function is as follows. Carrier protein that may be involved in membrane-trafficking events associated with cell plate formation during cytokinesis. Binds to some hydrophobic molecules such as phosphoinositides and promotes their transfer between the different cellular sites. This is Patellin-5 (PATL5) from Arabidopsis thaliana (Mouse-ear cress).